The chain runs to 134 residues: Holo-[acyl-carrier-protein] synthase (134 aa).

Residues D8 and E58 each contribute to the Mg(2+) site.

The protein belongs to the P-Pant transferase superfamily. AcpS family. Mg(2+) serves as cofactor.

Its subcellular location is the cytoplasm. The catalysed reaction is apo-[ACP] + CoA = holo-[ACP] + adenosine 3',5'-bisphosphate + H(+). Its function is as follows. Transfers the 4'-phosphopantetheine moiety from coenzyme A to a Ser of acyl-carrier-protein. This is Holo-[acyl-carrier-protein] synthase from Acidiphilium cryptum (strain JF-5).